Reading from the N-terminus, the 265-residue chain is Type III pantothenate kinase (265 aa).

6-13 is a binding site for ATP; sequence DVGNTNIV. 112–115 is a substrate binding site; it reads GADR. Residue D114 is the Proton acceptor of the active site. D134 is a K(+) binding site. T137 serves as a coordination point for ATP. Substrate is bound at residue T189.

Belongs to the type III pantothenate kinase family. In terms of assembly, homodimer. NH4(+) serves as cofactor. Requires K(+) as cofactor.

The protein localises to the cytoplasm. It carries out the reaction (R)-pantothenate + ATP = (R)-4'-phosphopantothenate + ADP + H(+). Its pathway is cofactor biosynthesis; coenzyme A biosynthesis; CoA from (R)-pantothenate: step 1/5. Its function is as follows. Catalyzes the phosphorylation of pantothenate (Pan), the first step in CoA biosynthesis. The sequence is that of Type III pantothenate kinase from Saccharopolyspora erythraea (strain ATCC 11635 / DSM 40517 / JCM 4748 / NBRC 13426 / NCIMB 8594 / NRRL 2338).